The sequence spans 294 residues: Protoheme IX farnesyltransferase (294 aa).

A run of 8 helical transmembrane segments spans residues Pro-19–Met-39, Leu-41–Val-61, Val-89–Ile-109, Pro-111–Trp-131, Leu-138–Ala-158, Ala-166–Ile-186, Val-218–Leu-238, and Ser-272–Trp-292.

Belongs to the UbiA prenyltransferase family. Protoheme IX farnesyltransferase subfamily.

Its subcellular location is the cell membrane. The enzyme catalyses heme b + (2E,6E)-farnesyl diphosphate + H2O = Fe(II)-heme o + diphosphate. It functions in the pathway porphyrin-containing compound metabolism; heme O biosynthesis; heme O from protoheme: step 1/1. In terms of biological role, converts heme B (protoheme IX) to heme O by substitution of the vinyl group on carbon 2 of heme B porphyrin ring with a hydroxyethyl farnesyl side group. The polypeptide is Protoheme IX farnesyltransferase (Korarchaeum cryptofilum (strain OPF8)).